Reading from the N-terminus, the 1217-residue chain is ATP-dependent helicase/nuclease subunit A (1217 aa).

The region spanning 10-475 is the UvrD-like helicase ATP-binding domain; it reads VIWTDAQWQS…IDLSQNFRSR (466 aa). ATP is bound at residue 31–38; that stretch reads AAAGSGKT. Residues 476–786 enclose the UvrD-like helicase C-terminal domain; it reads KEVLSTTNYI…RMMTIHSSKG (311 aa).

This sequence belongs to the helicase family. AddA subfamily. In terms of assembly, heterodimer of AddA and AddB/RexB. It depends on Mg(2+) as a cofactor.

The catalysed reaction is Couples ATP hydrolysis with the unwinding of duplex DNA by translocating in the 3'-5' direction.. It catalyses the reaction ATP + H2O = ADP + phosphate + H(+). In terms of biological role, the heterodimer acts as both an ATP-dependent DNA helicase and an ATP-dependent, dual-direction single-stranded exonuclease. Recognizes the chi site generating a DNA molecule suitable for the initiation of homologous recombination. The AddA nuclease domain is required for chi fragment generation; this subunit has the helicase and 3' -&gt; 5' nuclease activities. The protein is ATP-dependent helicase/nuclease subunit A of Staphylococcus aureus (strain MSSA476).